The chain runs to 777 residues: Translation initiation factor IF-2 (777 aa).

Disordered regions lie at residues 30-54 and 98-117; these read SPSM…QDEN and EDSN…SFKE. The segment covering 98–109 has biased composition (basic and acidic residues); sequence EDSNEKTNDRDS. Positions 279–449 constitute a tr-type G domain; that stretch reads PKPPIVTFMG…LLIAELMKLE (171 aa). The G1 stretch occupies residues 288 to 295; that stretch reads GHVDHGKT. 288-295 contacts GTP; that stretch reads GHVDHGKT. The interval 313–317 is G2; that stretch reads GITQH. The G3 stretch occupies residues 334–337; that stretch reads DTPG. Residues 334–338 and 388–391 each bind GTP; these read DTPGH and NKID. Residues 388 to 391 are G4; the sequence is NKID. The interval 425–427 is G5; it reads SAK.

This sequence belongs to the TRAFAC class translation factor GTPase superfamily. Classic translation factor GTPase family. IF-2 subfamily.

It localises to the cytoplasm. In terms of biological role, one of the essential components for the initiation of protein synthesis. Protects formylmethionyl-tRNA from spontaneous hydrolysis and promotes its binding to the 30S ribosomal subunits. Also involved in the hydrolysis of GTP during the formation of the 70S ribosomal complex. This is Translation initiation factor IF-2 from Wolbachia sp. subsp. Brugia malayi (strain TRS).